A 331-amino-acid chain; its full sequence is Cytosolic arginine sensor for mTORC1 subunit 1 (331 aa).

Serine 14 is subject to Phosphoserine. An ACT 1 domain is found at 72–139; the sequence is AEATWLVMNV…SVVIHTLARE (68 aa). 110-111 serves as a coordination point for L-arginine; that stretch reads SV. The tract at residues 155 to 174 is disordered; sequence GDDSSNGFPQAQHGPSPTVH. Over residues 156–174 the composition is skewed to polar residues; sequence DDSSNGFPQAQHGPSPTVH. The 61-residue stretch at 262–322 folds into the ACT 2 domain; the sequence is WRMVRIGGQP…SCVIDILQRR (61 aa). L-arginine contacts are provided by residues glycine 273, 279–280, and 299–303; these read IV and TFNFD.

The protein belongs to the GATS family. In terms of assembly, forms homodimers and heterodimers with CASTOR2. Interacts with the GATOR2 complex which is composed of MIOS, SEC13, SEH1L, WDR24 and WDR59; the interaction is negatively regulated by arginine. Interacts with TM4SF5; the interaction is positively regulated by leucine and is negatively regulated by arginine. Post-translationally, phosphorylation at Ser-14 by AKT1, promoting the interaction between CASTOR1 and RNF167. In terms of processing, ubiquitinated by RNF167 via 'Lys-29'-polyubiquitination, leading to its degradation, releasing the GATOR2 complex. Ubiquitination by RNF167 is promoted by phosphorylation at Ser-14 by AKT1.

Its subcellular location is the cytoplasm. The protein localises to the cytosol. Functions as an intracellular arginine sensor within the amino acid-sensing branch of the TORC1 signaling pathway. As a homodimer or a heterodimer with CASTOR2, binds and inhibits the GATOR subcomplex GATOR2 and thereby mTORC1. Binding of arginine to CASTOR1 allosterically disrupts the interaction of CASTOR1-containing dimers with GATOR2 which can in turn activate mTORC1 and the TORC1 signaling pathway. This is Cytosolic arginine sensor for mTORC1 subunit 1 from Rattus norvegicus (Rat).